The following is a 620-amino-acid chain: Guanylate-binding protein 3 (620 aa).

A GTPase domain (Globular) region spans residues 1-304; sequence MEAPICLVEN…NAINSGTVPC (304 aa). The region spanning 29 to 271 is the GB1/RHD3-type G domain; it reads AQPLVVVAIV…FCSYIFTNGK (243 aa). Residues 39–46, 61–63, and 91–95 contribute to the GTP site; these read GLYRTGKS, LGS, and DTEGL. Coiled coils occupy residues 375-411 and 477-582; these read KKLV…SESL and DGER…TRRK.

Belongs to the TRAFAC class dynamin-like GTPase superfamily. GB1/RHD3 GTPase family. GB1 subfamily. In terms of assembly, heterodimer with other family members, including GBP1, GBP2 and GBP5. Dimerization regulates subcellular location. In terms of tissue distribution, brain, lung, heart, spleen, kidney, liver and intestine.

It is found in the cytoplasm. Its subcellular location is the perinuclear region. The protein localises to the golgi apparatus membrane. It carries out the reaction GTP + H2O = GDP + phosphate + H(+). Interferon (IFN)-inducible GTPase that plays important roles in innate immunity against a diverse range of bacterial, viral and protozoan pathogens. Hydrolyzes GTP very efficiently; GDP rather than GMP is the major reaction product. Following infection, recruited to the pathogen-containing vacuoles or vacuole-escaped bacteria and acts as a positive regulator of inflammasome assembly by promoting the release of inflammasome ligands from bacteria. Acts by promoting lysis of pathogen-containing vacuoles, releasing pathogens into the cytosol. Following pathogen release in the cytosol, promotes recruitment of proteins that mediate bacterial cytolysis, such as Gm12250/Irgb10: this liberates ligands that are detected by inflammasomes, such as lipopolysaccharide (LPS) that activates the non-canonical CASP4/CASP11 inflammasome or double-stranded DNA (dsDNA) that activates the AIM2 inflammasome. May play a role in erythroid differentiation. This Mus musculus (Mouse) protein is Guanylate-binding protein 3.